Consider the following 528-residue polypeptide: Xylose import ATP-binding protein XylG (528 aa).

ABC transporter domains are found at residues Leu-6 to Glu-245 and Phe-262 to Pro-507. An ATP-binding site is contributed by Gly-38–Ser-45. Residues Leu-504–Thr-528 form a disordered region.

The protein belongs to the ABC transporter superfamily. Xylose importer (TC 3.A.1.2.4) family. As to quaternary structure, the complex is composed of two ATP-binding proteins (XylG), two transmembrane proteins (XylH) and a solute-binding protein (XylF).

It localises to the cell inner membrane. The enzyme catalyses D-xylose(out) + ATP + H2O = D-xylose(in) + ADP + phosphate + H(+). Its function is as follows. Part of the ABC transporter complex XylFGH involved in xylose import. Responsible for energy coupling to the transport system. The polypeptide is Xylose import ATP-binding protein XylG (Pseudomonas syringae pv. tomato (strain ATCC BAA-871 / DC3000)).